A 1093-amino-acid chain; its full sequence is Mediator of RNA polymerase II transcription subunit 14 (1093 aa).

Disordered stretches follow at residues 1–62 and 1034–1065; these read MPGV…IDGH and ETKS…ANDT. A compositionally biased stretch (polar residues) spans 19 to 31; sequence DTQTPSNGDNLRN. The segment covering 41–62 has biased composition (basic and acidic residues); the sequence is KGDKDHDPDKESYAGKPRIDGH. Residues 1040 to 1056 are compositionally biased toward polar residues; it reads DYSTQPAPENQSQTGAP.

It belongs to the Mediator complex subunit 14 family. As to quaternary structure, component of the Mediator complex.

It localises to the nucleus. Functionally, component of the Mediator complex, a coactivator involved in the regulated transcription of nearly all RNA polymerase II-dependent genes. Mediator functions as a bridge to convey information from gene-specific regulatory proteins to the basal RNA polymerase II transcription machinery. Mediator is recruited to promoters by direct interactions with regulatory proteins and serves as a scaffold for the assembly of a functional preinitiation complex with RNA polymerase II and the general transcription factors. The protein is Mediator of RNA polymerase II transcription subunit 14 (rgr1) of Aspergillus fumigatus (strain ATCC MYA-4609 / CBS 101355 / FGSC A1100 / Af293) (Neosartorya fumigata).